The chain runs to 224 residues: Cytochrome c biogenesis ATP-binding export protein CcmA (224 aa).

The ABC transporter domain maps to 1–220; sequence MQNAEAAPAL…EYAHAEVVGA (220 aa). 40–47 contacts ATP; the sequence is GANGSGKT.

This sequence belongs to the ABC transporter superfamily. CcmA exporter (TC 3.A.1.107) family. The complex is composed of two ATP-binding proteins (CcmA) and two transmembrane proteins (CcmB).

The protein localises to the cell inner membrane. It catalyses the reaction heme b(in) + ATP + H2O = heme b(out) + ADP + phosphate + H(+). Functionally, part of the ABC transporter complex CcmAB involved in the biogenesis of c-type cytochromes; once thought to export heme, this seems not to be the case, but its exact role is uncertain. Responsible for energy coupling to the transport system. This Bordetella parapertussis (strain 12822 / ATCC BAA-587 / NCTC 13253) protein is Cytochrome c biogenesis ATP-binding export protein CcmA.